The primary structure comprises 793 residues: Phenylalanine--tRNA ligase beta subunit (793 aa).

Positions 39 to 148 constitute a tRNA-binding domain; that stretch reads AGQFTHVIVA…DEAPIGMDLR (110 aa). The B5 domain occupies 401-477; the sequence is PGTVSFLFDT…RLYGYDKLQA (77 aa). The Mg(2+) site is built by Asp455, Asp461, Glu464, and Glu465. Residues 698–792 form the FDX-ACB domain; it reads SKYPQIRRDL…LENEFSILLR (95 aa).

This sequence belongs to the phenylalanyl-tRNA synthetase beta subunit family. Type 1 subfamily. Tetramer of two alpha and two beta subunits. Requires Mg(2+) as cofactor.

The protein resides in the cytoplasm. It carries out the reaction tRNA(Phe) + L-phenylalanine + ATP = L-phenylalanyl-tRNA(Phe) + AMP + diphosphate + H(+). The polypeptide is Phenylalanine--tRNA ligase beta subunit (Legionella pneumophila (strain Paris)).